Consider the following 343-residue polypeptide: Dimethyladenosine transferase 1, mitochondrial (343 aa).

Residues 1-27 constitute a mitochondrion transit peptide; the sequence is MAASGKLSTWRLPPLPTIREIIKLLRV. The S-adenosyl-L-methionine site is built by L38, G63, E85, K86, D111, V112, and N141.

The protein belongs to the class I-like SAM-binding methyltransferase superfamily. rRNA adenine N(6)-methyltransferase family. KsgA subfamily. As to quaternary structure, interacts with mitochondrial RNA polymerase POLRMT. Interacts with TFAM. Bound to the maturing mtSSU until the late stages of assembly.

It localises to the mitochondrion. The enzyme catalyses adenosine(N)/adenosine(N+1) in rRNA + 4 S-adenosyl-L-methionine = N(6)-dimethyladenosine(N)/N(6)-dimethyladenosine(N+1) in rRNA + 4 S-adenosyl-L-homocysteine + 4 H(+). S-adenosyl-L-methionine-dependent methyltransferase which specifically dimethylates mitochondrial 12S rRNA at the conserved stem loop. Also required for basal transcription of mitochondrial DNA, probably via its interaction with POLRMT and TFAM. Stimulates transcription independently of the methyltransferase activity. In terms of biological role, mitochondrial methyltransferase which uses S-adenosyl methionine to dimethylate two highly conserved adjacent adenosine residues (A1583 and A1584) within the loop of helix 45 at the 3-prime end of 12S rRNA, thereby regulating the assembly or stability of the small subunit of the mitochondrial ribosome. Also required for basal transcription of mitochondrial DNA, probably via its interaction with POLRMT and TFAM. Stimulates transcription independently of the methyltransferase activity. This chain is Dimethyladenosine transferase 1, mitochondrial (TFB1M), found in Pongo abelii (Sumatran orangutan).